The sequence spans 536 residues: Glutamate--tRNA ligase, mitochondrial (536 aa).

Position 48–50 (48–50 (RFA)) interacts with L-glutamate. Residues 53-61 (PTGFLHLGS) carry the 'HIGH' region motif. Histidine 58 is an ATP binding site. L-glutamate contacts are provided by residues glutamate 84, 235-239 (YHLAN), and arginine 253. ATP-binding positions include glutamate 256 and 291-295 (KLSKR). The short motif at 291–295 (KLSKR) is the 'KMSKS' region element.

The protein belongs to the class-I aminoacyl-tRNA synthetase family. Glutamate--tRNA ligase type 1 subfamily.

The protein localises to the mitochondrion matrix. The catalysed reaction is tRNA(Glu) + L-glutamate + ATP = L-glutamyl-tRNA(Glu) + AMP + diphosphate. Catalyzes the attachment of glutamate to tRNA(Glu) in a two-step reaction: glutamate is first activated by ATP to form Glu-AMP and then transferred to the acceptor end of tRNA(Glu). The sequence is that of Glutamate--tRNA ligase, mitochondrial (MSE1) from Saccharomyces cerevisiae (strain ATCC 204508 / S288c) (Baker's yeast).